Here is a 164-residue protein sequence, read N- to C-terminus: Hoefavidin (164 aa).

An N-terminal signal peptide occupies residues 1–22 (MNKVLAIVLTITVAGFAQTAFA). One can recognise an Avidin-like domain in the interval 32 to 155 (KLLAGASNWV…GQDDFMQSVA (124 aa)). Residues asparagine 42, serine 46, tyrosine 68, asparagine 70, and glycine 76 each coordinate biotin. Residues cysteine 77 and cysteine 108 are joined by a disulfide bond. Residues serine 110, threonine 112, and aspartate 148 each coordinate biotin.

Belongs to the avidin/streptavidin family. In terms of assembly, exhibits a dynamic oligomeric assembly: the apo form exits as homooctamers, which dissociate into homodimers upon biotin binding. The X-ray structure of the intact hoefavidin reveals unique crystal packing generated by an octameric cylindrical structure wherein the C-terminal segments of each monomer are introduced into the entrance of the biotin-binding site of an adjacent non-canonical monomer.

The protein localises to the secreted. The exact role played by hoefavidin in the host organism is still obscure. Forms a strong non-covalent complex with biotin and 2-iminobiotin. The chain is Hoefavidin from Hoeflea phototrophica (strain DSM 17068 / NCIMB 14078 / DFL-43).